The sequence spans 739 residues: Phosphoribosylformylglycinamidine synthase subunit PurL (739 aa).

Histidine 53 is a catalytic residue. Tyrosine 56 and lysine 95 together coordinate ATP. A Mg(2+)-binding site is contributed by glutamate 97. Substrate contacts are provided by residues 98–101 (SHNH) and arginine 120. Histidine 99 acts as the Proton acceptor in catalysis. Aspartate 121 contacts Mg(2+). Glutamine 244 provides a ligand contact to substrate. Aspartate 274 contributes to the Mg(2+) binding site. 318 to 320 (ESQ) is a substrate binding site. 2 residues coordinate ATP: aspartate 501 and glycine 538. Asparagine 539 is a Mg(2+) binding site. Serine 541 is a substrate binding site.

Belongs to the FGAMS family. Monomer. Part of the FGAM synthase complex composed of 1 PurL, 1 PurQ and 2 PurS subunits.

It is found in the cytoplasm. The catalysed reaction is N(2)-formyl-N(1)-(5-phospho-beta-D-ribosyl)glycinamide + L-glutamine + ATP + H2O = 2-formamido-N(1)-(5-O-phospho-beta-D-ribosyl)acetamidine + L-glutamate + ADP + phosphate + H(+). The protein operates within purine metabolism; IMP biosynthesis via de novo pathway; 5-amino-1-(5-phospho-D-ribosyl)imidazole from N(2)-formyl-N(1)-(5-phospho-D-ribosyl)glycinamide: step 1/2. Its function is as follows. Part of the phosphoribosylformylglycinamidine synthase complex involved in the purines biosynthetic pathway. Catalyzes the ATP-dependent conversion of formylglycinamide ribonucleotide (FGAR) and glutamine to yield formylglycinamidine ribonucleotide (FGAM) and glutamate. The FGAM synthase complex is composed of three subunits. PurQ produces an ammonia molecule by converting glutamine to glutamate. PurL transfers the ammonia molecule to FGAR to form FGAM in an ATP-dependent manner. PurS interacts with PurQ and PurL and is thought to assist in the transfer of the ammonia molecule from PurQ to PurL. This Listeria monocytogenes serotype 4a (strain HCC23) protein is Phosphoribosylformylglycinamidine synthase subunit PurL.